An 86-amino-acid chain; its full sequence is Cerebrin prohormone (86 aa).

Positions 1–27 are cleaved as a signal peptide; sequence MFGYRSLLVLLVTLSLCLLLQSSHCSA. Positions 28–64 are excised as a propeptide; it reads VRTYGNDLDARARREIISLAARLIKLSMYGPEDDSFV. At Ile-83 the chain carries Isoleucine amide.

Expressed only in cerebral ganglion.

It is found in the secreted. In terms of biological role, may function as a hormone and may play a neuromodulatory role. The protein is Cerebrin prohormone (CBPH) of Aplysia californica (California sea hare).